We begin with the raw amino-acid sequence, 305 residues long: Outer membrane protein assembly factor BamD (305 aa).

A signal peptide spans 1 to 24; the sequence is MLRIFQGRPAVTIAAVLVAASVAG. Residue cysteine 25 is the site of N-palmitoyl cysteine attachment. Residue cysteine 25 is the site of S-diacylglycerol cysteine attachment. TPR repeat units lie at residues 41-74, 78-111, 113-136, and 174-207; these read VELLYSTGADRLDRGNWNEAVDYFREVERQHPYS, RRSILMTGYAHYMGNQYAEAIGDADRFISLYPGN, SAQYAFYLKAICYFEQIVDVNRDQ, and AGKEMAIGRWYLKNGQTLAAIGRFKAVIERHQTT.

It belongs to the BamD family. As to quaternary structure, part of the Bam complex.

The protein localises to the cell outer membrane. Functionally, part of the outer membrane protein assembly complex, which is involved in assembly and insertion of beta-barrel proteins into the outer membrane. The chain is Outer membrane protein assembly factor BamD from Caulobacter vibrioides (strain ATCC 19089 / CIP 103742 / CB 15) (Caulobacter crescentus).